We begin with the raw amino-acid sequence, 322 residues long: tRNA-modifying protein YgfZ (322 aa).

Tryptophan 182 contributes to the folate binding site.

It belongs to the tRNA-modifying YgfZ family.

The protein resides in the cytoplasm. In terms of biological role, folate-binding protein involved in regulating the level of ATP-DnaA and in the modification of some tRNAs. It is probably a key factor in regulatory networks that act via tRNA modification, such as initiation of chromosomal replication. This chain is tRNA-modifying protein YgfZ, found in Vibrio parahaemolyticus serotype O3:K6 (strain RIMD 2210633).